Reading from the N-terminus, the 677-residue chain is MQTSTEVVPPLMSRFRPSAAPRKPAPFLPMSRAEMDKLGWDACDIVLVTGDAYVDHPSFGMAIIGRLLESQGFRVGIISQPDWQSAEPFKALGKPRVFFGVTGGNMDSMVNRYTADRRLRHDDAYTPNGEGGKRPDRCTLVYAQRCREAFKDVPIILGGIEASLRRIAHYDYWSDKVRRSVLADAKADLLLYGNAERAVIEVAHRLAAGEAPRELEDIRGVALFRRVPENTIELHADDLDAADEGARQVRGDVVIRLPSCEQVEQDKEAYARASRVLHRESNPGNARPLVQRHGDRDLWLNPPPIPLTTEEMDSVYDLPYARAPHPSYGNAKIPAWDMIKTSVTIMRGCFGGCTFCSITEHEGRIIQSRSEASILQEIEKIRDKTPGFTGVISDIGGPTANMYRMACKDSNIESSCRKPSCVFPDICPNLNTSHDDLIRLYRKVREVKGIKRVMVASGVRYDLAVKSPAYIKELVSHHVGGYLKIAPEHTERGPLDKMMKPGIGTYHRFKQMFEAAAKQAGKQYYLIPYFIAAHPGTTDEDMMNLALWLKRNRYRADQVQTFLPSPMATATAMYHSGVNPLRGVRHGASEPVEAIKGLRQRRLHKAFLRYHDPDNWPVLREALKAMGRADLIGSRPDQLVPAHQPPGTGKAAGTRRPVRGDGPKPQRFTTKGVRLVK.

One can recognise a Radical SAM core domain in the interval 335–601 (AWDMIKTSVT…VEAIKGLRQR (267 aa)). Residues cysteine 349, cysteine 353, and cysteine 356 each contribute to the [4Fe-4S] cluster site. Residues 635-677 (RPDQLVPAHQPPGTGKAAGTRRPVRGDGPKPQRFTTKGVRLVK) form a disordered region.

Belongs to the UPF0313 family. The cofactor is [4Fe-4S] cluster.

This is UPF0313 protein RPA0679 from Rhodopseudomonas palustris (strain ATCC BAA-98 / CGA009).